The chain runs to 558 residues: Putative transposase for insertion sequence IS1162 (558 aa).

Residues 11 to 93 enclose the HTH IS408-type domain; the sequence is IKECLRLKFE…PDLITIHREL (83 aa). Residues 23–44 constitute a DNA-binding region (H-T-H motif); the sequence is LSHEKIARALQLSKGVVSKYVT. In terms of domain architecture, Integrase catalytic spans 139–336; the sequence is QQHRAGEKLF…HPYEVVTFKR (198 aa). Residues 486-558 form a disordered region; sequence QGLDQQPLPK…AAGQPQPELR (73 aa).

This sequence belongs to the transposase IS21/IS408/IS1162 family.

In terms of biological role, required for the transposition of the insertion element. In Pseudomonas fluorescens, this protein is Putative transposase for insertion sequence IS1162.